The following is a 159-amino-acid chain: MSRRAPGSRLSSGGTNYSRSWNDWQPRTDSASADPGNLKYSSSRDRGGSSSYGLQPSNSAVVSRQRHDDTRVHADIQNDEKGGYSVNGGSGENTYGRKSLGQELRVNNVTSPEFTSVQHGSRALATKDMRKSQERSMSYCDESRLSNLLRRITREDDRD.

Residues 1–139 (MSRRAPGSRL…RKSQERSMSY (139 aa)) are disordered. Residues 9 to 31 (RLSSGGTNYSRSWNDWQPRTDSA) are compositionally biased toward polar residues. Residues 65 to 82 (QRHDDTRVHADIQNDEKG) show a composition bias toward basic and acidic residues. Polar residues predominate over residues 105-119 (RVNNVTSPEFTSVQH). The span at 125 to 134 (ATKDMRKSQE) shows a compositional bias: basic and acidic residues.

This is an uncharacterized protein from Homo sapiens (Human).